A 463-amino-acid chain; its full sequence is 3-phosphoshikimate 1-carboxyvinyltransferase (463 aa).

3-phosphoshikimate is bound by residues K26, S27, and R31. K26 contacts phosphoenolpyruvate. Residues G99 and R127 each contribute to the phosphoenolpyruvate site. S163, S164, Q165, S188, D300, and K327 together coordinate 3-phosphoshikimate. Q165 lines the phosphoenolpyruvate pocket. D300 acts as the Proton acceptor in catalysis. The phosphoenolpyruvate site is built by R331 and R372.

The protein belongs to the EPSP synthase family. Monomer.

The protein resides in the cytoplasm. The enzyme catalyses 3-phosphoshikimate + phosphoenolpyruvate = 5-O-(1-carboxyvinyl)-3-phosphoshikimate + phosphate. It participates in metabolic intermediate biosynthesis; chorismate biosynthesis; chorismate from D-erythrose 4-phosphate and phosphoenolpyruvate: step 6/7. In terms of biological role, catalyzes the transfer of the enolpyruvyl moiety of phosphoenolpyruvate (PEP) to the 5-hydroxyl of shikimate-3-phosphate (S3P) to produce enolpyruvyl shikimate-3-phosphate and inorganic phosphate. This chain is 3-phosphoshikimate 1-carboxyvinyltransferase, found in Burkholderia pseudomallei (Pseudomonas pseudomallei).